A 388-amino-acid chain; its full sequence is 3-dehydroquinate synthase (388 aa).

Belongs to the archaeal-type DHQ synthase family.

The enzyme catalyses 2-amino-2,3,7-trideoxy-D-lyxo-hept-6-ulosonate + NAD(+) + H2O = 3-dehydroquinate + NH4(+) + NADH + H(+). Catalyzes the oxidative deamination and cyclization of 2-amino-3,7-dideoxy-D-threo-hept-6-ulosonic acid (ADH) to yield 3-dehydroquinate (DHQ), which is fed into the canonical shikimic pathway of aromatic amino acid biosynthesis. In Natronomonas pharaonis (strain ATCC 35678 / DSM 2160 / CIP 103997 / JCM 8858 / NBRC 14720 / NCIMB 2260 / Gabara) (Halobacterium pharaonis), this protein is 3-dehydroquinate synthase.